The chain runs to 341 residues: HTH-type transcriptional repressor PurR (341 aa).

In terms of domain architecture, HTH lacI-type spans 2–56; that stretch reads ATIKDVAKHAGVSTTTVSHVINKTRFVAENTKAAVWAAIKELHYSPSAVARSLKV. Positions 4 to 23 form a DNA-binding region, H-T-H motif; sequence IKDVAKHAGVSTTTVSHVIN. A DNA-binding region spans residues 48–56; sequence SAVARSLKV. Hypoxanthine is bound by residues Y73, R190, T192, and D275.

As to quaternary structure, homodimer.

It participates in purine metabolism; purine nucleotide biosynthesis [regulation]. In terms of biological role, is the main repressor of the genes involved in the de novo synthesis of purine nucleotides, regulating purB, purC, purEK, purF, purHD, purL, purMN and guaBA expression. PurR is allosterically activated to bind its cognate DNA by binding the purine corepressors, hypoxanthine or guanine, thereby effecting transcription repression. In Yersinia pestis bv. Antiqua (strain Antiqua), this protein is HTH-type transcriptional repressor PurR.